We begin with the raw amino-acid sequence, 150 residues long: Protein E6 (150 aa).

Zinc fingers lie at residues 31–67 (CVFC…CACC) and 104–140 (CYLC…CLHC).

This sequence belongs to the papillomaviridae E6 protein family. In terms of assembly, forms homodimers. Interacts with ubiquitin-protein ligase UBE3A/E6-AP; this interaction stimulates UBE3A ubiquitin activity. Interacts with host TP53 and EP300; this interaction inhibits TP53 activity. Interacts with human ZYX.

Its subcellular location is the host cytoplasm. It localises to the host nucleus. Its function is as follows. Plays a major role in the induction and maintenance of cellular transformation. E6 associates with host UBE3A/E6-AP ubiquitin-protein ligase and modulates its activity. Sequesters tumor suppressor TP53 in the host cytoplasm and modulates its activity by interacting with host EP300 that results in the reduction of TP53 acetylation and activation. In turn, apoptosis induced by DNA damage is inhibited. E6 also protects host keratinocytes from apoptosis by mediating the degradation of host BAK1. May also inhibit host immune response. In Human papillomavirus type 6a, this protein is Protein E6.